A 121-amino-acid chain; its full sequence is NADPH-dependent 7-cyano-7-deazaguanine reductase (121 aa).

Residue cysteine 36 is the Thioimide intermediate of the active site. Residue aspartate 43 is the Proton donor of the active site. Residues 58–60 (VEL) and 77–78 (YE) each bind substrate.

The protein belongs to the GTP cyclohydrolase I family. QueF type 1 subfamily.

The protein resides in the cytoplasm. It carries out the reaction 7-aminomethyl-7-carbaguanine + 2 NADP(+) = 7-cyano-7-deazaguanine + 2 NADPH + 3 H(+). It participates in tRNA modification; tRNA-queuosine biosynthesis. Its function is as follows. Catalyzes the NADPH-dependent reduction of 7-cyano-7-deazaguanine (preQ0) to 7-aminomethyl-7-deazaguanine (preQ1). The polypeptide is NADPH-dependent 7-cyano-7-deazaguanine reductase (Rhodopirellula baltica (strain DSM 10527 / NCIMB 13988 / SH1)).